Reading from the N-terminus, the 64-residue chain is Large ribosomal subunit protein bL35 (64 aa).

The tract at residues methionine 1–isoleucine 22 is disordered.

It belongs to the bacterial ribosomal protein bL35 family.

In Mycobacterium tuberculosis (strain ATCC 25177 / H37Ra), this protein is Large ribosomal subunit protein bL35.